The following is a 216-amino-acid chain: Probable disulfide bond formation protein D (216 aa).

The first 25 residues, 1-25, serve as a signal peptide directing secretion; that stretch reads MKSNKLMALGIVFSIAVLIVIGTIA. A disulfide bond links Cys65 and Cys68.

The protein belongs to the thioredoxin family. DsbA subfamily.

In terms of biological role, may be required for disulfide bond formation in some proteins. This is Probable disulfide bond formation protein D (bdbD) from Bacillus cereus (strain ATCC 14579 / DSM 31 / CCUG 7414 / JCM 2152 / NBRC 15305 / NCIMB 9373 / NCTC 2599 / NRRL B-3711).